Consider the following 344-residue polypeptide: MTHDLNDTLIFVKVVEQGSFIAAANSLGLPKTTVSRKVQELETRLGARLLHRTTRRIGLTEAGAVYHEHCQRIARELEEAESAVGQLQSGPRGWLRFTVPYSLGITWIAPLLGEFHAQYPEIQLDMHLGNEKLDLIGGEADLALRVGALPDSNLVARKLGSLRTQVFASPSYIERYGEPLHPDELQFHRTLALRKNRNVHNNRFFWSLSDGSDVREFPVNPLMVANDPAALNGAVLCGEGLLLTGDVMAKPFVQSGMVRRVLAGWTGPEVDFNAVFAGGRLVSPKVRAFVDFLVTRLNFDADYMMAQCPARLAAQRANGDAEVEVEVEAELRAEGKRILEKATA.

The HTH lysR-type domain maps to 3–60; it reads HDLNDTLIFVKVVEQGSFIAAANSLGLPKTTVSRKVQELETRLGARLLHRTTRRIGLT. Positions 20–39 form a DNA-binding region, H-T-H motif; sequence FIAAANSLGLPKTTVSRKVQ.

Belongs to the LysR transcriptional regulatory family. Interacts with the cyclic di-GMP effector XC_3703.

Activity is regulated by cyclic di-GMP. Cyclic di-GMP specifically binds to XC_3703, which inhibits the interaction of the XC_2801-XC_3703 complex with DNA and prevents the transcription of the target genes. Its function is as follows. Transcriptional regulator that directly or indirectly regulates the expression of virulence-related genes, including flhB, aaeA, fliL and flgG. Binds to the promoter of the target genes only in the presence of XC_3703. This is HTH-type transcriptional regulator XC_2801 from Xanthomonas campestris pv. campestris (strain 8004).